The sequence spans 371 residues: Barbiturase 1 (371 aa).

The tract at residues 1–103 (MPDAIEVRKV…TIFATVPPED (103 aa)) is RU A. Substrate contacts are provided by residues R53 and 82 to 83 (SG). An RU B region spans residues 115–250 (RLTVGFAMSE…AQVVVVGNAP (136 aa)). The active site involves K165. Residues N197 and 233–234 (SS) each bind substrate. The active-site Nucleophile is the S233. The segment at 256-371 (YRIGHSVMKD…GPVAAIVDLG (116 aa)) is RU C. E304 contacts Mg(2+). Substrate contacts are provided by residues K331 and 350–351 (SV). Positions 353, 356, 357, 358, and 361 each coordinate Mg(2+).

This sequence belongs to the cyclic amide hydrolase (CyAH) family. As to quaternary structure, homotetramer.

The enzyme catalyses barbiturate + H2O = 3-oxo-3-ureidopropanoate. It functions in the pathway pyrimidine metabolism; uracil degradation via oxidative pathway; malonate and urea from uracil: step 2/3. With respect to regulation, inhibited by cyanuric acid. Responsible for the hydrolysis of barbituric acid (2,4,6-trihydroxy-1,3-pyrimidine), an intermediate in the oxidative catabolism of pyrimidines. Catalyzes the hydrolytic opening of the pyrimidine ring of barbituric acid to yield ureidomalonic acid. The protein is Barbiturase 1 of Nocardioides sp. (strain ATCC BAA-499 / JS614).